Here is a 102-residue protein sequence, read N- to C-terminus: Small ribosomal subunit protein uS10 (102 aa).

This sequence belongs to the universal ribosomal protein uS10 family. In terms of assembly, part of the 30S ribosomal subunit.

Its function is as follows. Involved in the binding of tRNA to the ribosomes. The chain is Small ribosomal subunit protein uS10 from Desulforamulus reducens (strain ATCC BAA-1160 / DSM 100696 / MI-1) (Desulfotomaculum reducens).